Reading from the N-terminus, the 458-residue chain is MEEERESLYEEMGCFDPNTPAEVTVESSFSQAEPPPPPPQVLVAGSTSNSNCSVEVEELSEFHLSPQDCPQASSTPLQFHINPPPPPPPPCDQLHNNLIHQMASHQQQHSNWDNGYQDFVNLGPNSATTPDLLSLLHLPRCSLPPNHHPSSMLPTSFSDIMSSSSAAAVMYDPLFHLNFPMQPRDQNQLRNGSCLLGVEDQIQMDANGGMNVLYFEGANNNNGGFENEILEFNNGVTRKGRGSRKSRTSPTERERRVHFNDRFFDLKNLIPNPTKIDRASIVGEAIDYIKELLRTIEEFKMLVEKKRCGRFRSKKRARVGEGGGGEDQEEEEDTVNYKPQSEVDQSCFNKNNNNSLRCSWLKRKSKVTEVDVRIIDDEVTIKLVQKKKINCLLFTTKVLDQLQLDLHHVAGGQIGEHYSFLFNTKICEGSCVYASGIADTLMEVVEKQYMEAVPSNGY.

The disordered stretch occupies residues 1-49; the sequence is MEEERESLYEEMGCFDPNTPAEVTVESSFSQAEPPPPPPQVLVAGSTSN. Residues 243–292 enclose the bHLH domain; sequence SRKSRTSPTERERRVHFNDRFFDLKNLIPNPTKIDRASIVGEAIDYIKEL. Residues 315–338 are disordered; it reads KRARVGEGGGGEDQEEEEDTVNYK. Residues 324-334 show a composition bias toward acidic residues; it reads GGEDQEEEEDT.

Homodimer.

The protein resides in the nucleus. In Arabidopsis thaliana (Mouse-ear cress), this protein is Transcription factor bHLH10 (BHLH10).